A 101-amino-acid polypeptide reads, in one-letter code: Small ribosomal subunit protein uS14 (101 aa).

Belongs to the universal ribosomal protein uS14 family. In terms of assembly, part of the 30S ribosomal subunit. Contacts proteins S3 and S10.

Binds 16S rRNA, required for the assembly of 30S particles and may also be responsible for determining the conformation of the 16S rRNA at the A site. This chain is Small ribosomal subunit protein uS14, found in Pseudomonas putida (strain ATCC 47054 / DSM 6125 / CFBP 8728 / NCIMB 11950 / KT2440).